Here is a 78-residue protein sequence, read N- to C-terminus: Exodeoxyribonuclease 7 small subunit (78 aa).

The protein belongs to the XseB family. As to quaternary structure, heterooligomer composed of large and small subunits.

It is found in the cytoplasm. The enzyme catalyses Exonucleolytic cleavage in either 5'- to 3'- or 3'- to 5'-direction to yield nucleoside 5'-phosphates.. Bidirectionally degrades single-stranded DNA into large acid-insoluble oligonucleotides, which are then degraded further into small acid-soluble oligonucleotides. The chain is Exodeoxyribonuclease 7 small subunit from Mycobacterium leprae (strain TN).